A 423-amino-acid polypeptide reads, in one-letter code: Progestin and adipoQ receptor-like protein 1 (423 aa).

The Cytoplasmic segment spans residues 1-201; it reads MDPDEVNQAL…KSIWSLHTET (201 aa). The tract at residues 54 to 140 is disordered; it reads VVSPTNSDDE…DEDELEVDVK (87 aa). Over residues 60-69 the composition is skewed to acidic residues; that stretch reads SDDEEGEFCS. Residues 104–114 show a composition bias toward basic residues; the sequence is TVLRYRRKKGG. A helical membrane pass occupies residues 202 to 222; sequence GNIWTHLIGCVAFFLLACWFL. Residues 223–234 are Extracellular-facing; it reads TRPDNHIQFQEK. Residues 235 to 252 traverse the membrane as a helical segment; it reads VVFSFFFAGAVSVSDSRS. Residues 253–288 lie on the Cytoplasmic side of the membrane; that stretch reads PSTPSRVIRSTSSRYSANSTIWESRCSLSARLFQPK. A helical membrane pass occupies residues 289-309; that stretch reads ITYIAMVCVLGIGAIVVSLWD. The Extracellular portion of the chain corresponds to 310 to 320; it reads KFSESKYRPVR. Residues 321-341 form a helical membrane-spanning segment; sequence AAVFVGMGCSGVIPTIHYIIT. Residues 342–351 are Cytoplasmic-facing; sequence DGVHSLFADN. Residues 352–372 form a helical membrane-spanning segment; it reads SFHWLLLMAFLYLLGAALYAT. Over 373–392 the chain is Extracellular; the sequence is RTPERFFPGKCDIWFQSHQL. A helical transmembrane segment spans residues 393-413; it reads FHTCVVIAAFVHYYGISEMAF. Residues 414–423 are Cytoplasmic-facing; it reads ARLNEQCPVR.

The protein belongs to the ADIPOR family.

Its subcellular location is the membrane. Probable receptor, which may be involved in metabolic pathways that regulate lipid metabolism such as fatty acid oxidation. In Caenorhabditis briggsae, this protein is Progestin and adipoQ receptor-like protein 1.